Here is a 368-residue protein sequence, read N- to C-terminus: Anti-sigma-X factor RsiX (368 aa).

Positions 73–87 (QPQQKEASQENAVTK) are enriched in polar residues. Residues 73–101 (QPQQKEASQENAVTKTETEDSPKAASSLD) are disordered.

It localises to the cell membrane. Its function is as follows. The anti-sigma factor for extracytoplasmic function (ECF) sigma factor SigX, inhibits SigX activity and stabilizes it. This is Anti-sigma-X factor RsiX (rsiX) from Bacillus subtilis (strain 168).